The following is an 85-amino-acid chain: Antibacterial factor-related peptide 1 (85 aa).

Residues 1–19 (MLYFCLLLVLLLPNNGVSS) form the signal peptide.

As to expression, expressed in the pharynx and body wall muscle.

The protein resides in the secreted. The sequence is that of Antibacterial factor-related peptide 1 from Caenorhabditis elegans.